Here is a 191-residue protein sequence, read N- to C-terminus: Inosine triphosphate pyrophosphatase (191 aa).

Residue 15–20 participates in ITP binding; sequence TGNTNK. Glu-43 is a binding site for Mg(2+). ITP contacts are provided by residues Lys-55, 71–72, Lys-88, 147–150, Lys-168, and 173–174; these read DT, FGWD, and HR.

The protein belongs to the HAM1 NTPase family. Homodimer. Requires Mg(2+) as cofactor. Mn(2+) is required as a cofactor.

The protein localises to the cytoplasm. It localises to the nucleus. The enzyme catalyses ITP + H2O = IMP + diphosphate + H(+). It catalyses the reaction dITP + H2O = dIMP + diphosphate + H(+). It carries out the reaction XTP + H2O = XMP + diphosphate + H(+). Pyrophosphatase that hydrolyzes non-canonical purine nucleotides such as inosine triphosphate (ITP), deoxyinosine triphosphate (dITP) or xanthosine 5'-triphosphate (XTP) to their respective monophosphate derivatives. The enzyme does not distinguish between the deoxy- and ribose forms. Probably excludes non-canonical purines from RNA and DNA precursor pools, thus preventing their incorporation into RNA and DNA and avoiding chromosomal lesions. The chain is Inosine triphosphate pyrophosphatase from Chaetomium globosum (strain ATCC 6205 / CBS 148.51 / DSM 1962 / NBRC 6347 / NRRL 1970) (Soil fungus).